The sequence spans 99 residues: Leydig cell tumor 10 kDa protein homolog (99 aa).

The interval 1–36 (MAQGQRKFQAHKPAKSKTAAAASEKNRGPRKGGRVI) is disordered.

It belongs to the UPF0390 family.

Its function is as follows. May have a potential role in hypercalcemia of malignancy. The protein is Leydig cell tumor 10 kDa protein homolog (C19orf53) of Homo sapiens (Human).